Consider the following 429-residue polypeptide: UPF0053 protein YugS (429 aa).

Transmembrane regions (helical) follow at residues 1 to 21 (MLILQLIAIFVLIGITAVFVA), 61 to 81 (ACQLGITITALGLGWLGEPTF), 101 to 121 (IVTFVVAFIIVTFLHVVMGEL), and 133 to 153 (AVSLWIAKPLIWFYKITYPFI). In terms of domain architecture, CNNM transmembrane spans 1-201 (MLILQLIAIF…YEKGEINQSE (201 aa)). CBS domains follow at residues 220–281 (MIPR…PIKL) and 284–341 (IMRP…IRDE).

This sequence belongs to the UPF0053 family.

The protein localises to the cell membrane. This chain is UPF0053 protein YugS (yugS), found in Bacillus subtilis (strain 168).